The following is a 359-amino-acid chain: Peptide chain release factor 1 (359 aa).

An N5-methylglutamine modification is found at Gln-236. The interval 286-305 (KKEMERSTMRKSQIGSGDRS) is disordered.

It belongs to the prokaryotic/mitochondrial release factor family. Post-translationally, methylated by PrmC. Methylation increases the termination efficiency of RF1.

It is found in the cytoplasm. Peptide chain release factor 1 directs the termination of translation in response to the peptide chain termination codons UAG and UAA. This is Peptide chain release factor 1 from Wolbachia pipientis wMel.